Here is a 408-residue protein sequence, read N- to C-terminus: Voltage-gated potassium channel subunit beta-1 (408 aa).

NADP(+)-binding residues include Thr97, Trp98, Gln104, and Asp126. The active-site Proton donor/acceptor is the Tyr131. Residues Asn199, Ser229, Arg230, Gln255, Trp284, Ser285, Pro286, Leu287, Ala288, Cys289, Lys295, Arg305, Gly364, Ser366, Gln370, Glu373, and Asn374 each coordinate NADP(+).

The protein belongs to the shaker potassium channel beta subunit family. As to quaternary structure, homotetramer. Interaction with tetrameric potassium channel alpha subunits gives rise to a heterooctamer. Identified in potassium channel complexes containing KCNA1, KCNA2, KCNA4, KCNA5, KCNA6, KCNAB1 and KCNAB2. Part of a complex containing KCNA1, KCNA4 and LGI1; interaction with LGI1 inhibits down-regulation of KCNA1 channel activity. Interacts with the dimer formed by GNB1 and GNG2; this enhances KCNA1 binding. Interacts with SQSTM1. In terms of tissue distribution, expression most abundant in aorta. Also high in left ventricle. Also detected in right ventricle, atrium, brain, skeletal muscle and kidney. Not detected in liver.

It is found in the cytoplasm. It localises to the membrane. The protein resides in the cell membrane. It carries out the reaction a primary alcohol + NADP(+) = an aldehyde + NADPH + H(+). The catalysed reaction is a secondary alcohol + NADP(+) = a ketone + NADPH + H(+). Its function is as follows. Regulatory subunit of the voltage-gated potassium (Kv) Shaker channels composed of pore-forming and potassium-conducting alpha subunits and of regulatory beta subunits. The beta-1/KCNAB1 cytoplasmic subunit mediates closure of delayed rectifier potassium channels by physically obstructing the pore via its N-terminal domain and increases the speed of channel closure for other family members. Promotes the inactivation of Kv1.1/KCNA1, Kv1.2/KCNA2, Kv1.4/KCNA4, Kv1.5/KCNA5 and Kv1.6/KCNA6 alpha subunit-containing channels. Displays nicotinamide adenine dinucleotide phosphate (NADPH)-dependent aldoketoreductase activity by catalyzing the NADPH-dependent reduction of a variety of endogenous aldehydes and ketones. The binding of NADPH is required for efficient down-regulation of potassium channel activity. Oxidation of the bound NADPH restrains N-terminal domain from blocking the channel, thereby decreasing N-type inactivation of potassium channel activity. This is Voltage-gated potassium channel subunit beta-1 (KCNAB1) from Mustela putorius (European polecat).